A 119-amino-acid polypeptide reads, in one-letter code: Ribonuclease (119 aa).

Residues Lys-6 and Arg-9 each contribute to the substrate site. His-11 serves as the catalytic Proton acceptor. Cystine bridges form between Cys-26/Cys-81, Cys-40/Cys-92, and Cys-58/Cys-107. Substrate-binding positions include 41 to 45 and Arg-82; that span reads KFTNT. His-114 acts as the Proton donor in catalysis.

It belongs to the pancreatic ribonuclease family. In terms of assembly, monomer. Interacts with and forms tight 1:1 complexes with RNH1. Dimerization of two such complexes may occur. Interaction with RNH1 inhibits this protein.

It is found in the secreted. The catalysed reaction is an [RNA] containing cytidine + H2O = an [RNA]-3'-cytidine-3'-phosphate + a 5'-hydroxy-ribonucleotide-3'-[RNA].. The enzyme catalyses an [RNA] containing uridine + H2O = an [RNA]-3'-uridine-3'-phosphate + a 5'-hydroxy-ribonucleotide-3'-[RNA].. In terms of biological role, endonuclease that catalyzes the cleavage of RNA on the 3' side of pyrimidine nucleotides. Acts on single-stranded and double-stranded RNA. The protein is Ribonuclease of Chelonia mydas (Green sea-turtle).